Consider the following 349-residue polypeptide: UDP-glucose 4-epimerase (349 aa).

NAD(+)-binding positions include 10–12 (GFI), 31–35 (DNFAN), 66–67 (DV), and Lys-92. 132–134 (SAT) serves as a coordination point for substrate. Tyr-158 serves as the catalytic Proton acceptor. NAD(+)-binding residues include Lys-162 and Tyr-186. Substrate contacts are provided by residues 186-188 (YFN), 207-209 (NNL), 225-227 (TIY), Arg-240, and 303-306 (RPGD).

Belongs to the NAD(P)-dependent epimerase/dehydratase family. Requires NAD(+) as cofactor. In terms of tissue distribution, expressed in gonads, vulva, intestine, hypdermis and nervous system.

It catalyses the reaction UDP-alpha-D-glucose = UDP-alpha-D-galactose. It carries out the reaction UDP-N-acetyl-alpha-D-glucosamine = UDP-N-acetyl-alpha-D-galactosamine. It participates in carbohydrate metabolism; galactose metabolism. In terms of biological role, catalyzes two distinct but analogous reactions: the reversible epimerization of UDP-glucose to UDP-galactose and the reversible epimerization of UDP-N-acetylglucosamine to UDP-N-acetylgalactosamine. The reaction with UDP-Gal plays a critical role in the Leloir pathway of galactose catabolism in which galactose is converted to the glycolytic intermediate glucose 6-phosphate. It contributes to the catabolism of dietary galactose and enables the endogenous biosynthesis of both UDP-Gal and UDP-GalNAc when exogenous sources are limited. Both UDP-sugar interconversions are important for the synthesis of glycoproteins and glycolipids. The protein is UDP-glucose 4-epimerase of Caenorhabditis elegans.